Reading from the N-terminus, the 73-residue chain is Large ribosomal subunit protein bL31 (73 aa).

It belongs to the bacterial ribosomal protein bL31 family. Type A subfamily. Part of the 50S ribosomal subunit.

Binds the 23S rRNA. The polypeptide is Large ribosomal subunit protein bL31 (Allorhizobium ampelinum (strain ATCC BAA-846 / DSM 112012 / S4) (Agrobacterium vitis (strain S4))).